A 196-amino-acid chain; its full sequence is Holliday junction branch migration complex subunit RuvA (196 aa).

Residues 1 to 63 (MYEYFKGIIS…EDAELLYGFA (63 aa)) form a domain I region. Residues 64-142 (TEEEKQLFLS…AADGLAESKA (79 aa)) form a domain II region. Residues 143–146 (PVQT) form a flexible linker region. Residues 147-196 (VDNQELEEAMEAMLALGYKATELKKIKKFFEGTTDTAENYIKSALKMLVK) are domain III.

Belongs to the RuvA family. Homotetramer. Forms an RuvA(8)-RuvB(12)-Holliday junction (HJ) complex. HJ DNA is sandwiched between 2 RuvA tetramers; dsDNA enters through RuvA and exits via RuvB. An RuvB hexamer assembles on each DNA strand where it exits the tetramer. Each RuvB hexamer is contacted by two RuvA subunits (via domain III) on 2 adjacent RuvB subunits; this complex drives branch migration. In the full resolvosome a probable DNA-RuvA(4)-RuvB(12)-RuvC(2) complex forms which resolves the HJ.

Its subcellular location is the cytoplasm. Its function is as follows. The RuvA-RuvB-RuvC complex processes Holliday junction (HJ) DNA during genetic recombination and DNA repair, while the RuvA-RuvB complex plays an important role in the rescue of blocked DNA replication forks via replication fork reversal (RFR). RuvA specifically binds to HJ cruciform DNA, conferring on it an open structure. The RuvB hexamer acts as an ATP-dependent pump, pulling dsDNA into and through the RuvAB complex. HJ branch migration allows RuvC to scan DNA until it finds its consensus sequence, where it cleaves and resolves the cruciform DNA. The sequence is that of Holliday junction branch migration complex subunit RuvA from Streptococcus gordonii (strain Challis / ATCC 35105 / BCRC 15272 / CH1 / DL1 / V288).